The chain runs to 231 residues: 5'-methylthioadenosine/S-adenosylhomocysteine nucleosidase (231 aa).

The active-site Proton acceptor is Glu-12. Substrate contacts are provided by residues Gly-78, Met-153, and 174–175; that span reads ME. Catalysis depends on Asp-198, which acts as the Proton donor.

Belongs to the PNP/UDP phosphorylase family. MtnN subfamily.

The enzyme catalyses S-adenosyl-L-homocysteine + H2O = S-(5-deoxy-D-ribos-5-yl)-L-homocysteine + adenine. It catalyses the reaction S-methyl-5'-thioadenosine + H2O = 5-(methylsulfanyl)-D-ribose + adenine. It carries out the reaction 5'-deoxyadenosine + H2O = 5-deoxy-D-ribose + adenine. The protein operates within amino-acid biosynthesis; L-methionine biosynthesis via salvage pathway; S-methyl-5-thio-alpha-D-ribose 1-phosphate from S-methyl-5'-thioadenosine (hydrolase route): step 1/2. Functionally, catalyzes the irreversible cleavage of the glycosidic bond in both 5'-methylthioadenosine (MTA) and S-adenosylhomocysteine (SAH/AdoHcy) to adenine and the corresponding thioribose, 5'-methylthioribose and S-ribosylhomocysteine, respectively. Also cleaves 5'-deoxyadenosine, a toxic by-product of radical S-adenosylmethionine (SAM) enzymes, into 5-deoxyribose and adenine. The chain is 5'-methylthioadenosine/S-adenosylhomocysteine nucleosidase from Psychromonas ingrahamii (strain DSM 17664 / CCUG 51855 / 37).